Consider the following 519-residue polypeptide: Circadian clock oscillator protein KaiC 1 (519 aa).

KaiC domains are found at residues 1 to 248 (MNLP…INIF) and 262 to 519 (ARIS…KTAE). ATP is bound by residues Gly50, Thr51, Gly52, Lys53, Thr54, Leu55, Ser90, Lys225, Leu226, Arg227, Thr229, His231, Thr241, Thr291, Gly292, Thr293, Gly294, Lys295, Thr296, and Leu297. Thr54 serves as a coordination point for Mg(2+). A Mg(2+)-binding site is contributed by Thr296. Glu319 is a binding site for Mg(2+). Trp332 contributes to the ATP binding site. Ser432 is subject to Phosphoserine; by autocatalysis. Thr433 is subject to Phosphothreonine; by autocatalysis. ATP contacts are provided by Arg452, Lys458, Met459, Arg460, Ser462, His464, and Lys466.

It belongs to the KaiC family. As to quaternary structure, homohexamer; hexamerization is dependent on ATP-binding. Core component of the KaiABC complex, at least composed of a KaiC homohexamer, a KaiB dimer and two KaiA dimers. Interacts directly with SasA. Multimerizes, probably forming homohexamers, no interaction with KaiC2 or KaiC3 is seen. Interacts with KaiA. In another study interacts with itself, KaiB1, KaiB3 and KaiC3. Interacts with SasA (hik8). It depends on Mg(2+) as a cofactor. Post-translationally, phosphorylated on serine and threonine residues by autocatalysis. Has a 4 step phosphorylation cycle; the autokinase acts first on Thr-433, then Ser-432. When Ser-432 is modified KaiC switches to an autophosphatase mode, acting first on phospho-Thr-433 then phospho-Ser-432.

It catalyses the reaction L-seryl-[protein] + ATP = O-phospho-L-seryl-[protein] + ADP + H(+). The enzyme catalyses L-threonyl-[protein] + ATP = O-phospho-L-threonyl-[protein] + ADP + H(+). It carries out the reaction ATP + H2O = ADP + phosphate + H(+). Its activity is regulated as follows. The interaction with KaiA enhances its phosphorylation status, while the interaction with KaiB decreases it. Functionally, component of the oscillator and circadian clock in this organism, enhances fitness in a rhythmic environment. Autophosphorylates in the presence of KaiA, no activity is seen in its absence. Its function is as follows. Central component of the KaiABC oscillator complex, which constitutes the main circadian regulator in cyanobacteria. Complex composition changes during the circadian cycle to control KaiC phosphorylation. KaiA stimulates KaiC autophosphorylation, while KaiB sequesters KaiA, leading to KaiC autodephosphorylation. Clock output pathways impact the RpaA transcriptional regulator. KaiC enhances the autophosphorylation activity of SasA, which then transfers its phosphate group to RpaA to activate it. KaiB and KaiC together enhance the phospho-RpaA dephosphatase activity of CikA. In terms of biological role, has a weak, temperature-independent ATPase activity; ATPase activity defines the circadian period. The phosphorylation state of KaiC modulates its ATPase activity and effects KaiB binding. The protein is Circadian clock oscillator protein KaiC 1 of Synechocystis sp. (strain ATCC 27184 / PCC 6803 / Kazusa).